The primary structure comprises 378 residues: Chorismate synthase (378 aa).

A disordered region spans residues 42 to 61 (IQAELDRRRPGQSPITTPRQ). Arg49 is a binding site for NADP(+). FMN contacts are provided by residues 126-128 (RAS), Gly287, 302-306 (KPTAT), and Arg328.

The protein belongs to the chorismate synthase family. As to quaternary structure, homotetramer. FMNH2 serves as cofactor.

It catalyses the reaction 5-O-(1-carboxyvinyl)-3-phosphoshikimate = chorismate + phosphate. The protein operates within metabolic intermediate biosynthesis; chorismate biosynthesis; chorismate from D-erythrose 4-phosphate and phosphoenolpyruvate: step 7/7. Catalyzes the anti-1,4-elimination of the C-3 phosphate and the C-6 proR hydrogen from 5-enolpyruvylshikimate-3-phosphate (EPSP) to yield chorismate, which is the branch point compound that serves as the starting substrate for the three terminal pathways of aromatic amino acid biosynthesis. This reaction introduces a second double bond into the aromatic ring system. The sequence is that of Chorismate synthase from Synechococcus sp. (strain JA-2-3B'a(2-13)) (Cyanobacteria bacterium Yellowstone B-Prime).